We begin with the raw amino-acid sequence, 155 residues long: MKLQLVAVGTKMPDWVQTGFSEYLRRFPKDMPFELIEIPAGKRGKNADIKRILDKEGEMMLAAAGKNRIVTLDIPGRPWDTPQLARELERWKQDGRDVSLLIGGPEGLSDACKAAAEQSWSLSALTLPHPLVRVIVAESLYRAWSITTNHPYHRE.

Residues leucine 72, glycine 103, and 122–127 (LSALTL) each bind S-adenosyl-L-methionine.

It belongs to the RNA methyltransferase RlmH family. In terms of assembly, homodimer.

Its subcellular location is the cytoplasm. The catalysed reaction is pseudouridine(1915) in 23S rRNA + S-adenosyl-L-methionine = N(3)-methylpseudouridine(1915) in 23S rRNA + S-adenosyl-L-homocysteine + H(+). Specifically methylates the pseudouridine at position 1915 (m3Psi1915) in 23S rRNA. This chain is Ribosomal RNA large subunit methyltransferase H, found in Cronobacter sakazakii (strain ATCC BAA-894) (Enterobacter sakazakii).